Reading from the N-terminus, the 471-residue chain is Glutamate--tRNA ligase (471 aa).

The 'HIGH' region motif lies at 10–20; that stretch reads PSPTGFLHIGG. The disordered stretch occupies residues 117–137; sequence GRPPRYDGRWRDRPASERPTD. A 'KMSKS' region motif is present at residues 239 to 243; it reads KLSKR. Lys-242 is a binding site for ATP.

The protein belongs to the class-I aminoacyl-tRNA synthetase family. Glutamate--tRNA ligase type 1 subfamily. In terms of assembly, monomer.

It is found in the cytoplasm. The enzyme catalyses tRNA(Glu) + L-glutamate + ATP = L-glutamyl-tRNA(Glu) + AMP + diphosphate. Its function is as follows. Catalyzes the attachment of glutamate to tRNA(Glu) in a two-step reaction: glutamate is first activated by ATP to form Glu-AMP and then transferred to the acceptor end of tRNA(Glu). In Azorhizobium caulinodans (strain ATCC 43989 / DSM 5975 / JCM 20966 / LMG 6465 / NBRC 14845 / NCIMB 13405 / ORS 571), this protein is Glutamate--tRNA ligase.